Here is a 1169-residue protein sequence, read N- to C-terminus: Pesticidal crystal protein Cry1Gb (1169 aa).

This sequence belongs to the delta endotoxin family.

Functionally, promotes colloidosmotic lysis by binding to the midgut epithelial cells of lepidopteran larvae. Toxic to Pieris rapae. This chain is Pesticidal crystal protein Cry1Gb (cry1Gb), found in Bacillus thuringiensis subsp. wuhanensis.